The following is a 284-amino-acid chain: MAAPNEFYETLKQRLAGVKHIVLVLSGKGGVGKSTVASQMAIGLIHRGLKVGLLDIDLTGPSIPTMFGVADQQVHTSSEGWVPLYKYDQRLAIMSIGFLLDSRDEAVIWRGPKKNAMIQQFLSEVCWDELDCLVVDTPPGTSDEHLSIVDALKLCKPDGAILVTTPQGVALSDVRREAEFCRKARLKVLGVVENMSGFACPHCKDCTNLFSKGGGEKLAQEIAAPFLGAIPIDPMLGQSLSRGEDFLASCQAAPSYEAVAALIDPLMAQLGLVQATADTSTPSH.

Position 27 to 34 (27 to 34 (GKGGVGKS)) interacts with ATP. [4Fe-4S] cluster-binding residues include Cys200 and Cys203.

Belongs to the Mrp/NBP35 ATP-binding proteins family. NUBP2/CFD1 subfamily. Heterotetramer of 2 NUBP1 and 2 NUBP2 chains. Requires [4Fe-4S] cluster as cofactor.

It is found in the cytoplasm. Functionally, component of the cytosolic iron-sulfur (Fe/S) protein assembly (CIA) machinery. Required for maturation of extramitochondrial Fe-S proteins. The NUBP1-NUBP2 heterotetramer forms a Fe-S scaffold complex, mediating the de novo assembly of an Fe-S cluster and its transfer to target apoproteins. This Monosiga brevicollis (Choanoflagellate) protein is Cytosolic Fe-S cluster assembly factor NUBP2 homolog.